A 157-amino-acid polypeptide reads, in one-letter code: Protein-export protein SecB (157 aa).

This sequence belongs to the SecB family. As to quaternary structure, homotetramer, a dimer of dimers. One homotetramer interacts with 1 SecA dimer.

It localises to the cytoplasm. In terms of biological role, one of the proteins required for the normal export of preproteins out of the cell cytoplasm. It is a molecular chaperone that binds to a subset of precursor proteins, maintaining them in a translocation-competent state. It also specifically binds to its receptor SecA. The polypeptide is Protein-export protein SecB (Alcanivorax borkumensis (strain ATCC 700651 / DSM 11573 / NCIMB 13689 / SK2)).